Reading from the N-terminus, the 118-residue chain is Large ribosomal subunit protein bL20 (118 aa).

Belongs to the bacterial ribosomal protein bL20 family.

In terms of biological role, binds directly to 23S ribosomal RNA and is necessary for the in vitro assembly process of the 50S ribosomal subunit. It is not involved in the protein synthesizing functions of that subunit. The protein is Large ribosomal subunit protein bL20 of Sulfurovum sp. (strain NBC37-1).